We begin with the raw amino-acid sequence, 602 residues long: Leucine-rich repeat-containing protein 40 (602 aa).

The segment at 1-22 (MSRLKRIAGQDPRAGFKEGGRD) is disordered. Residue Ser71 is modified to Phosphoserine. 20 LRR repeats span residues 83-104 (DLTK…LRLL), 106-127 (ALTV…IREL), 129-150 (NLQK…ITNL), 152-173 (NLKC…FEQF), 175-196 (NLED…FSSL), 198-219 (SLVR…INRM), 221-242 (RLKH…LAGM), 244-265 (SLEL…PSCS), 266-286 (LLKE…EHLK), 290-311 (SILV…IILL), 313-335 (SLER…GNLH), 336-356 (LKFL…IINK), 400-421 (TLKI…VFDA), 426-447 (IITS…MVEL), 450-472 (MVSD…CVLQ), 473-494 (KLTF…VESL), 496-517 (RLQT…LYRI), 519-540 (TLET…KMKM), 543-564 (NLTT…LGNC), and 566-586 (NLRT…AILM).

In Pongo abelii (Sumatran orangutan), this protein is Leucine-rich repeat-containing protein 40 (LRRC40).